Here is a 588-residue protein sequence, read N- to C-terminus: Aspartate--tRNA ligase (588 aa).

L-aspartate is bound at residue glutamate 172. The interval 196-199 (QLFK) is aspartate. Arginine 218 provides a ligand contact to L-aspartate. ATP-binding positions include 218-220 (RDE) and glutamine 227. Histidine 449 contributes to the L-aspartate binding site. Residue glutamate 483 participates in ATP binding. Residue arginine 490 participates in L-aspartate binding. ATP is bound at residue 535-538 (GLDR).

Belongs to the class-II aminoacyl-tRNA synthetase family. Type 1 subfamily. Homodimer.

It is found in the cytoplasm. It catalyses the reaction tRNA(Asp) + L-aspartate + ATP = L-aspartyl-tRNA(Asp) + AMP + diphosphate. Its function is as follows. Catalyzes the attachment of L-aspartate to tRNA(Asp) in a two-step reaction: L-aspartate is first activated by ATP to form Asp-AMP and then transferred to the acceptor end of tRNA(Asp). The polypeptide is Aspartate--tRNA ligase (Haemophilus influenzae (strain 86-028NP)).